The primary structure comprises 803 residues: Phenylalanine--tRNA ligase beta subunit (803 aa).

Residues 40 to 153 form the tRNA-binding domain; the sequence is ASLDRRIVVG…SSWEIGKPFA (114 aa). In terms of domain architecture, B5 spans 400 to 476; sequence ADLQLLALRP…RLYGYNAIES (77 aa). The Mg(2+) site is built by Asp454, Asp460, Glu463, and Glu464. In terms of domain architecture, FDX-ACB spans 709-801; that stretch reads SRFPVVERDI…AESKLGAVIR (93 aa).

This sequence belongs to the phenylalanyl-tRNA synthetase beta subunit family. Type 1 subfamily. As to quaternary structure, tetramer of two alpha and two beta subunits. Mg(2+) serves as cofactor.

The protein localises to the cytoplasm. The enzyme catalyses tRNA(Phe) + L-phenylalanine + ATP = L-phenylalanyl-tRNA(Phe) + AMP + diphosphate + H(+). This chain is Phenylalanine--tRNA ligase beta subunit, found in Chlorobium chlorochromatii (strain CaD3).